The chain runs to 30 residues: Cyclotide hyen-H (30 aa).

A cross-link (cyclopeptide (Lys-Asp)) is located at residues 1-30 (KIPCGESCVYIPCISSVLGCSCSNKVCYKD). Disulfide bonds link Cys4–Cys20, Cys8–Cys22, and Cys13–Cys27.

Post-translationally, this is a cyclic peptide. Detected in stems (at protein level).

Probably participates in a plant defense mechanism. The sequence is that of Cyclotide hyen-H from Pigea enneasperma (Spade flower).